The primary structure comprises 150 residues: Macrodomain Ter protein (150 aa).

Belongs to the MatP family. As to quaternary structure, homodimer.

Its subcellular location is the cytoplasm. Required for spatial organization of the terminus region of the chromosome (Ter macrodomain) during the cell cycle. Prevents early segregation of duplicated Ter macrodomains during cell division. Binds specifically to matS, which is a 13 bp signature motif repeated within the Ter macrodomain. The sequence is that of Macrodomain Ter protein from Salmonella arizonae (strain ATCC BAA-731 / CDC346-86 / RSK2980).